A 543-amino-acid chain; its full sequence is RuBisCO large subunit-binding protein subunit alpha, chloroplastic (543 aa).

Residues 1-2 constitute a chloroplast transit peptide; that stretch reads GA.

Belongs to the chaperonin (HSP60) family. As to quaternary structure, oligomer of probably six alpha and six beta subunits.

Its subcellular location is the plastid. It localises to the chloroplast. In terms of biological role, this protein binds RuBisCO small and large subunits and is implicated in the assembly of the enzyme oligomer. This chain is RuBisCO large subunit-binding protein subunit alpha, chloroplastic, found in Triticum aestivum (Wheat).